The chain runs to 265 residues: MLDLHQVIVSIIIGVIEGITEFLPISSTGHMIIASHWLKIDNENTKILEIFIEFGSALSILYFFHKKILRILKFNINVKKTNTKNLHILLAILPTIFFGLLFYKKIKLLFNTYNVMYALILGGIFLLISEIFKPKKYKTCSINDISLLQSAIIGFFQIFCLYPGFSRSGATIGTAILLGIKRSVAIEFSFIISIPLIMGASFYDFINNMHNFKILDLPIFFIGFMISFIVSILCIKKLLKIINRTSLIFFGIYRFIISGLIYFIN.

8 helical membrane passes run Val-7–Ser-27, Thr-45–His-65, Leu-86–Ile-106, Leu-108–Ile-128, Ile-145–Phe-165, Ile-186–Ile-206, Ile-214–Cys-234, and Thr-245–Asn-265.

It belongs to the UppP family.

Its subcellular location is the cell membrane. The enzyme catalyses di-trans,octa-cis-undecaprenyl diphosphate + H2O = di-trans,octa-cis-undecaprenyl phosphate + phosphate + H(+). In terms of biological role, catalyzes the dephosphorylation of undecaprenyl diphosphate (UPP). Confers resistance to bacitracin. The protein is Undecaprenyl-diphosphatase of Buchnera aphidicola subsp. Acyrthosiphon pisum (strain 5A).